The sequence spans 173 residues: 3-hydroxydecanoyl-[acyl-carrier-protein] dehydratase (173 aa).

The active site involves His71.

This sequence belongs to the thioester dehydratase family. FabA subfamily. In terms of assembly, homodimer.

It localises to the cytoplasm. The catalysed reaction is a (3R)-hydroxyacyl-[ACP] = a (2E)-enoyl-[ACP] + H2O. The enzyme catalyses (3R)-hydroxydecanoyl-[ACP] = (2E)-decenoyl-[ACP] + H2O. It carries out the reaction (2E)-decenoyl-[ACP] = (3Z)-decenoyl-[ACP]. Its pathway is lipid metabolism; fatty acid biosynthesis. Its function is as follows. Necessary for the introduction of cis unsaturation into fatty acids. Catalyzes the dehydration of (3R)-3-hydroxydecanoyl-ACP to E-(2)-decenoyl-ACP and then its isomerization to Z-(3)-decenoyl-ACP. Can catalyze the dehydratase reaction for beta-hydroxyacyl-ACPs with saturated chain lengths up to 16:0, being most active on intermediate chain length. In Bradyrhizobium diazoefficiens (strain JCM 10833 / BCRC 13528 / IAM 13628 / NBRC 14792 / USDA 110), this protein is 3-hydroxydecanoyl-[acyl-carrier-protein] dehydratase.